The chain runs to 1653 residues: Clathrin heavy chain (1653 aa).

Residues 1-483 (MSDLPIEFTE…FDTTLALACY (483 aa)) are globular terminal domain. WD40-like repeat stretches follow at residues 23–66 (FLDF…KNMG), 67–107 (GDSA…LDEP), 108–152 (VIFW…ANLN), 153–198 (NTQI…QAID), 199–263 (GHVA…PDAT), 264–307 (NDFP…ITAE), and 308–336 (SVFT…VEIS). Residues 453–469 (EKWLKEDKLECSEELGD) are binding site for the uncoating ATPase, involved in lattice disassembly. Residues 484-527 (LRAGAHAKVISCLAELQQFEKIIPYCQKVGYQPNFLVLISSLIR) form a flexible linker region. The segment at 528–1653 (SSPDRASEFA…SAMNVQPTGF (1126 aa)) is heavy chain arm. 7 CHCR repeats span residues 543-689 (NPET…QTVV), 692-834 (ATKF…DEAF), 839-978 (LQSV…QLID), 985-1130 (IPEL…IPDA), 1134-1275 (YIKA…FKLA), 1280-1426 (LNLI…SLLV), and 1429-1572 (LTSL…REGF). K1107 participates in a covalent cross-link: Glycyl lysine isopeptide (Lys-Gly) (interchain with G-Cter in ubiquitin). Residues 1219–1528 (AARLCYSAVS…LLYRRNKKWA (310 aa)) form an involved in binding clathrin light chain region.

It belongs to the clathrin heavy chain family. In terms of assembly, clathrin triskelions, composed of 3 heavy chains and 3 light chains, are the basic subunits of the clathrin coat. Interacts with the auxilin-like clathrin uncoating factor SWA2. Interacts with INP53.

The protein resides in the cytoplasmic vesicle membrane. It is found in the membrane. Its subcellular location is the coated pit. In terms of biological role, clathrin is the major protein of the polyhedral coat of coated pits and vesicles. In yeast, it is involved in the retention of proteins in an intracellular membrane compartment, presumably the trans-Golgi. This chain is Clathrin heavy chain (CHC1), found in Saccharomyces cerevisiae (strain ATCC 204508 / S288c) (Baker's yeast).